The primary structure comprises 460 residues: Mitochondrial distribution and morphology protein 10 (460 aa).

It belongs to the MDM10 family. In terms of assembly, component of the ER-mitochondria encounter structure (ERMES) or MDM complex, composed of MMM1, MDM10, MDM12 and MDM34. Associates with the mitochondrial outer membrane sorting assembly machinery SAM(core) complex.

The protein localises to the mitochondrion outer membrane. Functionally, component of the ERMES/MDM complex, which serves as a molecular tether to connect the endoplasmic reticulum and mitochondria. Components of this complex are involved in the control of mitochondrial shape and protein biogenesis and may function in phospholipid exchange. MDM10 is involved in the late assembly steps of the general translocase of the mitochondrial outer membrane (TOM complex). Functions in the TOM40-specific route of the assembly of outer membrane beta-barrel proteins, including the association of TOM40 with the receptor TOM22 and small TOM proteins. Can associate with the SAM(core) complex as well as the MDM12-MMM1 complex, both involved in late steps of the major beta-barrel assembly pathway, that is responsible for biogenesis of all outer membrane beta-barrel proteins. May act as a switch that shuttles between both complexes and channels precursor proteins into the TOM40-specific pathway. Plays a role in mitochondrial morphology and in the inheritance of mitochondria. The chain is Mitochondrial distribution and morphology protein 10 from Candida glabrata (strain ATCC 2001 / BCRC 20586 / JCM 3761 / NBRC 0622 / NRRL Y-65 / CBS 138) (Yeast).